Here is a 728-residue protein sequence, read N- to C-terminus: 1,4-alpha-glucan branching enzyme GlgB (728 aa).

The active-site Nucleophile is D405. E458 (proton donor) is an active-site residue.

This sequence belongs to the glycosyl hydrolase 13 family. GlgB subfamily. As to quaternary structure, monomer.

The catalysed reaction is Transfers a segment of a (1-&gt;4)-alpha-D-glucan chain to a primary hydroxy group in a similar glucan chain.. Its pathway is glycan biosynthesis; glycogen biosynthesis. In terms of biological role, catalyzes the formation of the alpha-1,6-glucosidic linkages in glycogen by scission of a 1,4-alpha-linked oligosaccharide from growing alpha-1,4-glucan chains and the subsequent attachment of the oligosaccharide to the alpha-1,6 position. The polypeptide is 1,4-alpha-glucan branching enzyme GlgB (Salmonella paratyphi A (strain ATCC 9150 / SARB42)).